The primary structure comprises 215 residues: Oligoribonuclease (215 aa).

The Exonuclease domain occupies 5 to 170 (LVWIDCEMTG…ADIHESIREL (166 aa)). Tyr127 is an active-site residue. The tract at residues 196–215 (LSDGAGAQEETDSAEAPQSG) is disordered.

It belongs to the oligoribonuclease family.

It localises to the cytoplasm. In terms of biological role, 3'-to-5' exoribonuclease specific for small oligoribonucleotides. This chain is Oligoribonuclease, found in Mycobacterium bovis (strain BCG / Pasteur 1173P2).